Here is a 116-residue protein sequence, read N- to C-terminus: Large ribosomal subunit protein bL19 (116 aa).

Belongs to the bacterial ribosomal protein bL19 family.

This protein is located at the 30S-50S ribosomal subunit interface and may play a role in the structure and function of the aminoacyl-tRNA binding site. The chain is Large ribosomal subunit protein bL19 from Geobacillus sp. (strain WCH70).